The primary structure comprises 483 residues: Altronate oxidoreductase (483 aa).

18-29 (IIQFGEGNFLRA) serves as a coordination point for NAD(+).

Belongs to the mannitol dehydrogenase family. UxaB subfamily.

It catalyses the reaction D-altronate + NAD(+) = keto-D-tagaturonate + NADH + H(+). It functions in the pathway carbohydrate metabolism; pentose and glucuronate interconversion. The sequence is that of Altronate oxidoreductase from Enterobacter sp. (strain 638).